The sequence spans 114 residues: Large ribosomal subunit protein bL20c (114 aa).

The protein belongs to the bacterial ribosomal protein bL20 family.

It is found in the plastid. Its function is as follows. Binds directly to 23S ribosomal RNA and is necessary for the in vitro assembly process of the 50S ribosomal subunit. It is not involved in the protein synthesizing functions of that subunit. This Prototheca wickerhamii protein is Large ribosomal subunit protein bL20c.